A 214-amino-acid polypeptide reads, in one-letter code: Ribonuclease P protein component 3 (214 aa).

This sequence belongs to the eukaryotic/archaeal RNase P protein component 3 family. As to quaternary structure, consists of a catalytic RNA component and at least 4-5 protein subunits. Forms a subcomplex with Rnp2 which stimulates the catalytic RNA.

It localises to the cytoplasm. The catalysed reaction is Endonucleolytic cleavage of RNA, removing 5'-extranucleotides from tRNA precursor.. Part of ribonuclease P, a protein complex that generates mature tRNA molecules by cleaving their 5'-ends. The RNA is catalytic, but its KM for pre-tRNA is 170-fold decreased in the presence of the 4 known protein subunits (Rnp1-4). The protein subunits also decrease the amount of Mg(2+) needed for activity. The polypeptide is Ribonuclease P protein component 3 (Pyrococcus furiosus (strain ATCC 43587 / DSM 3638 / JCM 8422 / Vc1)).